We begin with the raw amino-acid sequence, 1006 residues long: Cytosolic carboxypeptidase 3 (1006 aa).

In terms of domain architecture, Peptidase M14 spans 304 to 576 (YPYTYSNLQE…HFCDSLLDYC (273 aa)). Zn(2+) is bound by residues His368, Glu371, and His464. The active-site Proton donor/acceptor is Glu540. The segment at 790 to 810 (ESHHQLKSKAKRCSSFQSKRT) is disordered.

This sequence belongs to the peptidase M14 family. It depends on Zn(2+) as a cofactor. As to expression, widely expressed. Expressed abundantly in tissues with m otile cilia such as testis, lung and trachea. Abundantly expressed in pituitary and kidney, moderately expressed in brain, eye, fat, pancreas, stomach, and adrenal.

The protein resides in the cytoplasm. It is found in the cytosol. The catalysed reaction is (L-glutamyl)(n+1)-gamma-L-glutamyl-L-glutamyl-[protein] + H2O = (L-glutamyl)(n)-gamma-L-glutamyl-L-glutamyl-[protein] + L-glutamate. Metallocarboxypeptidase that mediates deglutamylation of tubulin and non-tubulin target proteins. Catalyzes the removal of polyglutamate side chains present on the gamma-carboxyl group of glutamate residues within the C-terminal tail of tubulin protein. Specifically cleaves tubulin long-side-chains, while it is not able to remove the branching point glutamate. Also catalyzes the removal of polyglutamate residues from the carboxy-terminus of non-tubulin proteins such as MYLK. May catalyze the hydrolysis of aspartate from the carboxy-terminus of target proteins. Does not show detyrosinase or deglycylase activities from the carboxy-terminus of target proteins. In Mus musculus (Mouse), this protein is Cytosolic carboxypeptidase 3.